Here is a 214-residue protein sequence, read N- to C-terminus: Ras-related protein RABA5c (214 aa).

Gly-19 to Ser-26 is a GTP binding site. The short motif at Ser-41–Phe-49 is the Effector region element. GTP-binding positions include Asp-67 to Gln-71, Asn-125 to Asp-128, and Ser-155 to Ala-156. S-geranylgeranyl cysteine attachment occurs at residues Cys-211 and Cys-212.

It belongs to the small GTPase superfamily. Rab family. Interacts (via C-terminus) with GDI1. Interacts with PUX8/SAY1. As to expression, expressed in roots and actively dividing cells.

Its subcellular location is the golgi apparatus membrane. It localises to the golgi apparatus. It is found in the trans-Golgi network membrane. The protein localises to the cell membrane. Its function is as follows. Intracellular vesicle trafficking and protein transport. Binds GTP and GDP and possesses intrinsic GTPase activity. The chain is Ras-related protein RABA5c (RABA5C) from Arabidopsis thaliana (Mouse-ear cress).